A 173-amino-acid polypeptide reads, in one-letter code: Cell division protein SepF (173 aa).

Residues Phe31–Leu82 form a disordered region. Composition is skewed to basic and acidic residues over residues Asp39–Arg53 and Ser60–Ser72.

Belongs to the SepF family. As to quaternary structure, homodimer. Interacts with FtsZ.

The protein localises to the cytoplasm. Cell division protein that is part of the divisome complex and is recruited early to the Z-ring. Probably stimulates Z-ring formation, perhaps through the cross-linking of FtsZ protofilaments. Its function overlaps with FtsA. This is Cell division protein SepF from Thermobifida fusca (strain YX).